We begin with the raw amino-acid sequence, 261 residues long: MAYKPQFYPSATKVAENRRNHINPAFELEKLREIPDEDVVKIMGHRQPSEDYKTVHPPLEEMDLAEDYVRDLVGPINGAKEGHRIRYIQFADSMYFAPSQPYDRSRLYMSRFRGVDCGTLSGRQVVELRESNLEDISKNYLVDTELFDPATTGMRGATVHGHSLRLDENGVMFDALQRYEFDEATGHILYVKDQVGRPWDEPVDVGEPVPQEKLKEITTIYRKDGVAMRDDMEVVEVVKRIHRARTLGGYCPLNEIFDTYL.

R123 provides a ligand contact to coenzyme M.

It belongs to the methyl-coenzyme M reductase gamma subunit family. MCR is a hexamer of two alpha, two beta, and two gamma chains, forming a dimer of heterotrimers. It depends on coenzyme F430 as a cofactor.

The protein localises to the cytoplasm. The enzyme catalyses coenzyme B + methyl-coenzyme M = methane + coenzyme M-coenzyme B heterodisulfide. It participates in one-carbon metabolism; methyl-coenzyme M reduction; methane from methyl-coenzyme M: step 1/1. Functionally, component of the methyl-coenzyme M reductase (MCR) I that catalyzes the reductive cleavage of methyl-coenzyme M (CoM-S-CH3 or 2-(methylthio)ethanesulfonate) using coenzyme B (CoB or 7-mercaptoheptanoylthreonine phosphate) as reductant which results in the production of methane and the mixed heterodisulfide of CoB and CoM (CoM-S-S-CoB). This is the final step in methanogenesis. This chain is Methyl-coenzyme M reductase subunit gamma (mcrG), found in Methanococcus voltae.